The sequence spans 413 residues: CCA-adding enzyme (413 aa).

2 residues coordinate ATP: Ser-42 and Lys-45. Residues Ser-42 and Lys-45 each coordinate CTP. Mg(2+)-binding residues include Asp-54, Asp-56, and Asp-107. ATP-binding residues include His-130, Lys-150, and Tyr-159. CTP is bound by residues His-130, Lys-150, and Tyr-159.

It belongs to the tRNA nucleotidyltransferase/poly(A) polymerase family. Archaeal CCA-adding enzyme subfamily. Homodimer. It depends on Mg(2+) as a cofactor.

The catalysed reaction is a tRNA precursor + 2 CTP + ATP = a tRNA with a 3' CCA end + 3 diphosphate. It catalyses the reaction a tRNA with a 3' CCA end + 2 CTP + ATP = a tRNA with a 3' CCACCA end + 3 diphosphate. Its function is as follows. Catalyzes the addition and repair of the essential 3'-terminal CCA sequence in tRNAs without using a nucleic acid template. Adds these three nucleotides in the order of C, C, and A to the tRNA nucleotide-73, using CTP and ATP as substrates and producing inorganic pyrophosphate. tRNA 3'-terminal CCA addition is required both for tRNA processing and repair. Also involved in tRNA surveillance by mediating tandem CCA addition to generate a CCACCA at the 3' terminus of unstable tRNAs. While stable tRNAs receive only 3'-terminal CCA, unstable tRNAs are marked with CCACCA and rapidly degraded. The sequence is that of CCA-adding enzyme from Sulfurisphaera tokodaii (strain DSM 16993 / JCM 10545 / NBRC 100140 / 7) (Sulfolobus tokodaii).